Reading from the N-terminus, the 107-residue chain is MSQFTLADLERIVAERASVTDGTSYTASLVAKGQPKAAQKLGEEAVETVIAAVSGDRAGVVSESADLLYHLAVVWNIAGVALEDVLQELQRRTAQTGLAEKASRPKG.

It belongs to the PRA-PH family.

The protein resides in the cytoplasm. The enzyme catalyses 1-(5-phospho-beta-D-ribosyl)-ATP + H2O = 1-(5-phospho-beta-D-ribosyl)-5'-AMP + diphosphate + H(+). Its pathway is amino-acid biosynthesis; L-histidine biosynthesis; L-histidine from 5-phospho-alpha-D-ribose 1-diphosphate: step 2/9. The protein is Phosphoribosyl-ATP pyrophosphatase of Brucella abortus (strain S19).